The sequence spans 216 residues: Chaperone protein TorD (216 aa).

The protein belongs to the TorD/DmsD family. TorD subfamily.

It is found in the cytoplasm. In terms of biological role, involved in the biogenesis of TorA. Acts on TorA before the insertion of the molybdenum cofactor and, as a result, probably favors a conformation of the apoenzyme that is competent for acquiring the cofactor. The polypeptide is Chaperone protein TorD (Photobacterium profundum (strain SS9)).